The chain runs to 91 residues: Small ribosomal subunit protein bS20 (91 aa).

Residues 72-91 (KNAASRQKSRLAKKLNGLSA) are disordered.

It belongs to the bacterial ribosomal protein bS20 family.

Binds directly to 16S ribosomal RNA. This is Small ribosomal subunit protein bS20 from Halalkalibacterium halodurans (strain ATCC BAA-125 / DSM 18197 / FERM 7344 / JCM 9153 / C-125) (Bacillus halodurans).